Consider the following 348-residue polypeptide: Rhodopsin (348 aa).

Topologically, residues 1-33 (TEGPYFYIPMVNTTGIVRSPYEYPQYYLVNPAA) are extracellular. Asn-12 carries an N-linked (GlcNAc...) asparagine glycan. A helical membrane pass occupies residues 34 to 58 (YAMLGAYMFFLIIVGFPVNFMTLYV). The Cytoplasmic segment spans residues 59 to 70 (TLEHKKLRTPLN). A helical transmembrane segment spans residues 71–93 (YILLNLAVADLFMVIGGFTTTIY). At 94-107 (TSMHGYFVLGRLGC) the chain is on the extracellular side. A disulfide bridge links Cys-107 with Cys-184. The chain crosses the membrane as a helical span at residues 108 to 130 (NIEGFFATLGGMISLWSLAVLAI). Positions 131 to 133 (ERW) match the 'Ionic lock' involved in activated form stabilization motif. Topologically, residues 131-149 (ERWVVVCKPISNFRFGENH) are cytoplasmic. Residues 150–170 (AIMGVSLTWAMALACTVPPLV) form a helical membrane-spanning segment. The Extracellular portion of the chain corresponds to 171–199 (GWSRYIPEGMQCSCGIDYYTRAEGFNNES). Residue Asn-197 is glycosylated (N-linked (GlcNAc...) asparagine). A helical transmembrane segment spans residues 200-221 (FVLYMFFCHFTIPLTIIFFCYG). Residues 222-249 (RLLCAVKEAAAAQQESETTQRAEREVTR) are Cytoplasmic-facing. Residues 250–271 (MVIIMVIGFLICWLPYASVAWF) form a helical membrane-spanning segment. Topologically, residues 272-283 (IFTHQGSEFGPL) are extracellular. Residues 284–305 (FMTIPAFFAKSSSIYNPMIYIC) form a helical membrane-spanning segment. Position 293 is an N6-(retinylidene)lysine (Lys-293). Residues 306–348 (MNKQFRHCMITTLFCGKNPFEGEEEGASSTKTEASSASSVSPA) lie on the Cytoplasmic side of the membrane. Cys-320 is lipidated: S-palmitoyl cysteine. The segment at 327–348 (GEEEGASSTKTEASSASSVSPA) is disordered. Residues 332–348 (ASSTKTEASSASSVSPA) are compositionally biased toward low complexity.

Belongs to the G-protein coupled receptor 1 family. Opsin subfamily. In terms of processing, phosphorylated on some or all of the serine and threonine residues present in the C-terminal region. Post-translationally, contains one covalently linked retinal chromophore.

It localises to the membrane. Its subcellular location is the cell projection. The protein localises to the cilium. It is found in the photoreceptor outer segment. Photoreceptor required for image-forming vision at low light intensity. While most salt water fish species use retinal as chromophore, most freshwater fish use 3-dehydroretinal, or a mixture of retinal and 3-dehydroretinal. Light-induced isomerization of 11-cis to all-trans retinal triggers a conformational change that activates signaling via G-proteins. Subsequent receptor phosphorylation mediates displacement of the bound G-protein alpha subunit by arrestin and terminates signaling. This chain is Rhodopsin (rho), found in Sargocentron microstoma (Smallmouth squirrelfish).